Consider the following 350-residue polypeptide: dTDP-D-glucose 4,6-dehydratase (350 aa).

Thr142 serves as a coordination point for substrate. The Proton donor role is filled by Asp143. Catalysis depends on proton acceptor residues Glu144 and Tyr166.

Belongs to the NAD(P)-dependent epimerase/dehydratase family. dTDP-glucose dehydratase subfamily. The cofactor is NAD(+).

The enzyme catalyses dTDP-alpha-D-glucose = dTDP-4-dehydro-6-deoxy-alpha-D-glucose + H2O. This chain is dTDP-D-glucose 4,6-dehydratase (TGDS), found in Homo sapiens (Human).